A 359-amino-acid polypeptide reads, in one-letter code: Peptide chain release factor 1 (359 aa).

Gln236 carries the N5-methylglutamine modification. The segment at 288–307 is disordered; it reads QDEQDAERKSTIGTGDRSER. Basic and acidic residues predominate over residues 293-307; sequence AERKSTIGTGDRSER.

It belongs to the prokaryotic/mitochondrial release factor family. Post-translationally, methylated by PrmC. Methylation increases the termination efficiency of RF1.

It is found in the cytoplasm. In terms of biological role, peptide chain release factor 1 directs the termination of translation in response to the peptide chain termination codons UAG and UAA. This chain is Peptide chain release factor 1 (prfA), found in Streptococcus gordonii (strain Challis / ATCC 35105 / BCRC 15272 / CH1 / DL1 / V288).